Consider the following 93-residue polypeptide: U12-lycotoxin-Ls1a (93 aa).

The N-terminal stretch at 1–18 (MKFAVILLFSLVVLTVAS) is a signal peptide. Residues 19–38 (ESVEEVRREIDIEDLPEQQR) constitute a propeptide that is removed on maturation.

The protein belongs to the neurotoxin 31 family. Post-translationally, contains 5 disulfide bonds. In terms of tissue distribution, expressed by the venom gland.

Its subcellular location is the secreted. The polypeptide is U12-lycotoxin-Ls1a (Lycosa singoriensis (Wolf spider)).